A 340-amino-acid chain; its full sequence is Glycerol-3-phosphate dehydrogenase [NAD(P)+] (340 aa).

Residues S13, W14, and K108 each contribute to the NADPH site. Sn-glycerol 3-phosphate contacts are provided by K108, G139, and S141. A143 contributes to the NADPH binding site. 5 residues coordinate sn-glycerol 3-phosphate: K194, D247, S257, R258, and N259. The active-site Proton acceptor is K194. R258 lines the NADPH pocket. Residues V282 and E284 each coordinate NADPH.

The protein belongs to the NAD-dependent glycerol-3-phosphate dehydrogenase family.

It localises to the cytoplasm. It carries out the reaction sn-glycerol 3-phosphate + NAD(+) = dihydroxyacetone phosphate + NADH + H(+). The catalysed reaction is sn-glycerol 3-phosphate + NADP(+) = dihydroxyacetone phosphate + NADPH + H(+). It participates in membrane lipid metabolism; glycerophospholipid metabolism. Its function is as follows. Catalyzes the reduction of the glycolytic intermediate dihydroxyacetone phosphate (DHAP) to sn-glycerol 3-phosphate (G3P), the key precursor for phospholipid synthesis. This chain is Glycerol-3-phosphate dehydrogenase [NAD(P)+], found in Streptococcus thermophilus (strain CNRZ 1066).